A 645-amino-acid chain; its full sequence is MPSSHRLSATILIFLSLTYISSSSNLVEDITDKQDSSEDDDHLQTFPTPPPIGTTTASADSLFNRMNKILRKEEKQKSQNFQIFNEKDLVTNSNANPYFSTTRKPKNRSDSSQKARDPDPQNQVIAGIPDLSDPCFRRYENSIIVNAQPYERRSSTGLIHCKSHCLNSQIGVYSCRSFVYDNVNRVCDLFAHVGDQAPARLLKFQTRDYFEPTDIVHCLSMINGESSSSAPSSEDEDSPPSPPPSAPIVALATNTDKRDEHEEMTETIEDITVASPSSDSCPRGKQSTFLRTEGFELFSHDDQELVVGDVAECAKACIENKINGVALKCKSFDFLSSTSTCAFTSEAAVPVGNGQLKQREDASYHEKICVSKSFVESCPSTFFSRHPQMILVGFAESVSDSPSFEHCFDTCLNSYQLFGFNCTSGMYYFEENQLNCILNSENRNTQRELFTEENTDIVDYFEVECTTPRSKQSKRKMAGVRNFETDAIGADKMVTDHEDVEEDGSKWESWSECQDGKQTRRKICANFNQIEDCAEEVRDCVDEIDSTDMRMSIKRAGELENNDHEQIEDNNTDASEDPVPTKEEIAEVKQKIRRTGFKCPLNECCRVFLSCSYGLRHNSHTKQLEWCRRPCDPSLSSFKRSRLLR.

The first 23 residues, 1-23, serve as a signal peptide directing secretion; the sequence is MPSSHRLSATILIFLSLTYISSS. Disordered regions lie at residues 30-58 and 92-129; these read ITDKQDSSEDDDHLQTFPTPPPIGTTTAS and NSNANPYFSTTRKPKNRSDSSQKARDPDPQNQVIAGIP. Over residues 92-102 the composition is skewed to polar residues; it reads NSNANPYFSTT. A glycan (N-linked (GlcNAc...) asparagine) is linked at Asn-107. The segment covering 107–119 has biased composition (basic and acidic residues); it reads NRSDSSQKARDPD. The region spanning 135–214 is the PAN 1 domain; it reads CFRRYENSII…QTRDYFEPTD (80 aa). Intrachain disulfides connect Cys-161–Cys-187 and Cys-165–Cys-175. The disordered stretch occupies residues 225–247; it reads ESSSSAPSSEDEDSPPSPPPSAP. PAN domains are found at residues 281-369 and 378-465; these read CPRG…EKIC and CPST…EVEC. Intrachain disulfides connect Cys-281–Cys-369, Cys-313–Cys-341, Cys-317–Cys-329, Cys-378–Cys-465, Cys-407–Cys-436, and Cys-411–Cys-422. Residue Asn-421 is glycosylated (N-linked (GlcNAc...) asparagine). The span at 556–567 shows a compositional bias: basic and acidic residues; that stretch reads AGELENNDHEQI. The segment at 556–582 is disordered; that stretch reads AGELENNDHEQIEDNNTDASEDPVPTK. N-linked (GlcNAc...) asparagine glycosylation occurs at Asn-570.

This is an uncharacterized protein from Caenorhabditis elegans.